Here is a 175-residue protein sequence, read N- to C-terminus: Anterior gradient protein 2 homolog (175 aa).

A signal peptide spans 1–20; that stretch reads MEKFSVSAILLLVAISGTLA. A required to promote cell adhesion region spans residues 21 to 40; the sequence is KDTTVKSGAKKDPKDSRPKL. The tract at residues 24 to 44 is disordered; it reads TVKSGAKKDPKDSRPKLPQTL. The span at 29–38 shows a compositional bias: basic and acidic residues; the sequence is AKKDPKDSRP. 2 consecutive short sequence motifs (homodimer stabilization; interchain) follow at residues 45-54 and 60-67; these read SRGWGDQLIW and EALYRSKT.

Belongs to the AGR family. As to quaternary structure, monomer and homodimer. Interacts with LYPD3 and DAG1 (alphaDAG1). Interacts with MUC2; disulfide-linked. Expressed in lung, skeletal muscle, testis, liver, stomach, colon, small intestine, the goblet cells of the intestine and the mucuous neck cells of the stomach.

It localises to the secreted. The protein localises to the endoplasmic reticulum. Functionally, required for MUC2 post-transcriptional synthesis and secretion. May play a role in the production of mucus by intestinal cells. Proto-oncogene that may play a role in cell migration, cell differentiation and cell growth. Promotes cell adhesion. The polypeptide is Anterior gradient protein 2 homolog (Agr2) (Mus musculus (Mouse)).